We begin with the raw amino-acid sequence, 452 residues long: Cell division protein FtsZ (452 aa).

GTP contacts are provided by residues 24 to 28 (GAGSN), 111 to 113 (GTG), glutamate 142, arginine 146, and aspartate 190.

It belongs to the FtsZ family. Homodimer. Polymerizes to form a dynamic ring structure in a strictly GTP-dependent manner. Interacts directly with several other division proteins.

It localises to the cytoplasm. In terms of biological role, essential cell division protein that forms a contractile ring structure (Z ring) at the future cell division site. The regulation of the ring assembly controls the timing and the location of cell division. One of the functions of the FtsZ ring is to recruit other cell division proteins to the septum to produce a new cell wall between the dividing cells. Binds GTP and shows GTPase activity. This Rickettsia felis (strain ATCC VR-1525 / URRWXCal2) (Rickettsia azadi) protein is Cell division protein FtsZ.